The following is a 348-amino-acid chain: Dihydroorotate dehydrogenase (quinone) (348 aa).

FMN-binding positions include 60–64 and T84; that span reads AGFDK. K64 contributes to the substrate binding site. 109 to 113 contacts substrate; it reads NRLGF. The FMN site is built by N138 and N169. Residue N169 participates in substrate binding. Catalysis depends on S172, which acts as the Nucleophile. N174 serves as a coordination point for substrate. Positions 207 and 235 each coordinate FMN. Position 236-237 (236-237) interacts with substrate; sequence NT. FMN is bound by residues G258, G287, and 308–309; that span reads YS.

This sequence belongs to the dihydroorotate dehydrogenase family. Type 2 subfamily. In terms of assembly, monomer. Requires FMN as cofactor.

Its subcellular location is the cell membrane. The catalysed reaction is (S)-dihydroorotate + a quinone = orotate + a quinol. The protein operates within pyrimidine metabolism; UMP biosynthesis via de novo pathway; orotate from (S)-dihydroorotate (quinone route): step 1/1. Functionally, catalyzes the conversion of dihydroorotate to orotate with quinone as electron acceptor. This is Dihydroorotate dehydrogenase (quinone) from Parvibaculum lavamentivorans (strain DS-1 / DSM 13023 / NCIMB 13966).